Reading from the N-terminus, the 372-residue chain is 4-hydroxy-3-methylbut-2-en-1-yl diphosphate synthase (flavodoxin) (372 aa).

[4Fe-4S] cluster is bound by residues Cys-270, Cys-273, Cys-305, and Glu-312.

The protein belongs to the IspG family. It depends on [4Fe-4S] cluster as a cofactor.

The catalysed reaction is (2E)-4-hydroxy-3-methylbut-2-enyl diphosphate + oxidized [flavodoxin] + H2O + 2 H(+) = 2-C-methyl-D-erythritol 2,4-cyclic diphosphate + reduced [flavodoxin]. It functions in the pathway isoprenoid biosynthesis; isopentenyl diphosphate biosynthesis via DXP pathway; isopentenyl diphosphate from 1-deoxy-D-xylulose 5-phosphate: step 5/6. In terms of biological role, converts 2C-methyl-D-erythritol 2,4-cyclodiphosphate (ME-2,4cPP) into 1-hydroxy-2-methyl-2-(E)-butenyl 4-diphosphate. The chain is 4-hydroxy-3-methylbut-2-en-1-yl diphosphate synthase (flavodoxin) from Pseudoalteromonas translucida (strain TAC 125).